We begin with the raw amino-acid sequence, 302 residues long: GTPase Era (302 aa).

Residues 10–178 (RCGYVAIVGR…EAQIAKHLPE (169 aa)) enclose the Era-type G domain. Residues 18 to 25 (GRPNVGKS) are G1. 18 to 25 (GRPNVGKS) is a GTP binding site. Residues 44-48 (QTTRH) are G2. The interval 65–68 (DTPG) is G3. GTP is bound by residues 65 to 69 (DTPGM) and 127 to 130 (NKTD). The segment at 127–130 (NKTD) is G4. Residues 157–159 (ISA) are G5. The 85-residue stretch at 201–285 (VREKIMRQLG…MLNLWVKVKG (85 aa)) folds into the KH type-2 domain.

Belongs to the TRAFAC class TrmE-Era-EngA-EngB-Septin-like GTPase superfamily. Era GTPase family. Monomer.

Its subcellular location is the cytoplasm. It is found in the cell inner membrane. Functionally, an essential GTPase that binds both GDP and GTP, with rapid nucleotide exchange. Plays a role in 16S rRNA processing and 30S ribosomal subunit biogenesis and possibly also in cell cycle regulation and energy metabolism. In Pseudomonas putida (strain ATCC 47054 / DSM 6125 / CFBP 8728 / NCIMB 11950 / KT2440), this protein is GTPase Era.